A 351-amino-acid chain; its full sequence is Nicotinate-nucleotide--dimethylbenzimidazole phosphoribosyltransferase (351 aa).

Catalysis depends on glutamate 317, which acts as the Proton acceptor.

Belongs to the CobT family.

It catalyses the reaction 5,6-dimethylbenzimidazole + nicotinate beta-D-ribonucleotide = alpha-ribazole 5'-phosphate + nicotinate + H(+). It participates in nucleoside biosynthesis; alpha-ribazole biosynthesis; alpha-ribazole from 5,6-dimethylbenzimidazole: step 1/2. In terms of biological role, catalyzes the synthesis of alpha-ribazole-5'-phosphate from nicotinate mononucleotide (NAMN) and 5,6-dimethylbenzimidazole (DMB). The chain is Nicotinate-nucleotide--dimethylbenzimidazole phosphoribosyltransferase from Pseudomonas fluorescens (strain SBW25).